Consider the following 154-residue polypeptide: Myoglobin (154 aa).

The 147-residue stretch at 2–148 (GLSDQEWQHV…FRNDMASKYK (147 aa)) folds into the Globin domain. His-65 is a binding site for nitrite. An O2-binding site is contributed by His-65. His-94 serves as a coordination point for heme b.

In terms of assembly, monomeric.

It is found in the cytoplasm. Its subcellular location is the sarcoplasm. It carries out the reaction Fe(III)-heme b-[protein] + nitric oxide + H2O = Fe(II)-heme b-[protein] + nitrite + 2 H(+). The catalysed reaction is H2O2 + AH2 = A + 2 H2O. Functionally, monomeric heme protein which primary function is to store oxygen and facilitate its diffusion within muscle tissues. Reversibly binds oxygen through a pentacoordinated heme iron and enables its timely and efficient release as needed during periods of heightened demand. Depending on the oxidative conditions of tissues and cells, and in addition to its ability to bind oxygen, it also has a nitrite reductase activity whereby it regulates the production of bioactive nitric oxide. Under stress conditions, like hypoxia and anoxia, it also protects cells against reactive oxygen species thanks to its pseudoperoxidase activity. The chain is Myoglobin from Dromaius novaehollandiae (Emu).